The primary structure comprises 358 residues: Protein RecA (358 aa).

ATP is bound at residue 67 to 74 (GPESSGKT).

This sequence belongs to the RecA family.

It localises to the cytoplasm. Functionally, can catalyze the hydrolysis of ATP in the presence of single-stranded DNA, the ATP-dependent uptake of single-stranded DNA by duplex DNA, and the ATP-dependent hybridization of homologous single-stranded DNAs. It interacts with LexA causing its activation and leading to its autocatalytic cleavage. The sequence is that of Protein RecA from Xenorhabdus bovienii (Xenorhabdus nematophila subsp. bovienii).